We begin with the raw amino-acid sequence, 354 residues long: Uroporphyrinogen decarboxylase (354 aa).

Substrate contacts are provided by residues 27 to 31 (RQAGR), Asp77, Tyr154, Ser209, and His327.

The protein belongs to the uroporphyrinogen decarboxylase family. Homodimer.

It localises to the cytoplasm. It catalyses the reaction uroporphyrinogen III + 4 H(+) = coproporphyrinogen III + 4 CO2. The protein operates within porphyrin-containing compound metabolism; protoporphyrin-IX biosynthesis; coproporphyrinogen-III from 5-aminolevulinate: step 4/4. In terms of biological role, catalyzes the decarboxylation of four acetate groups of uroporphyrinogen-III to yield coproporphyrinogen-III. The chain is Uroporphyrinogen decarboxylase from Shewanella amazonensis (strain ATCC BAA-1098 / SB2B).